Here is a 475-residue protein sequence, read N- to C-terminus: UDP-glycosyltransferase 1 (475 aa).

The active-site Proton acceptor is the histidine 15. Histidine 15 serves as a coordination point for an anthocyanidin. Aspartate 117 acts as the Charge relay in catalysis. 7 residues coordinate UDP-alpha-D-glucose: alanine 345, glutamine 347, histidine 362, tryptophan 365, asparagine 366, serine 367, and glutamate 370. Glycine 385 provides a ligand contact to an anthocyanidin. Positions 386 and 387 each coordinate UDP-alpha-D-glucose.

Belongs to the UDP-glycosyltransferase family. In terms of tissue distribution, mostly expressed in leaves and flowers, and, to a lower extent, in roots and stems.

It carries out the reaction (20S)-protopanaxadiol + UDP-alpha-D-glucose = (20S)-ginsenoside C-K + UDP + H(+). It catalyses the reaction (20S)-ginsenoside Rg3 + UDP-alpha-D-glucose = (20S)-ginsenoside Rd + UDP + H(+). The catalysed reaction is (20S)-ginsenoside Rh2 + UDP-alpha-D-glucose = (20S)-ginsenoside F2 + UDP + H(+). The enzyme catalyses (20S)-protopanaxatriol + UDP-alpha-D-glucose = (20S)-ginsenoside F1 + UDP + H(+). It carries out the reaction dammarenediol-II + UDP-alpha-D-glucose = (20S)-20-O-(beta-D-glucosyl)-3-hydroxydammarene + UDP + H(+). Its pathway is secondary metabolite biosynthesis; terpenoid biosynthesis. Functionally, component of the dammarane-type triterpene saponins (e.g. ginsenosides or panaxosides) biosynthetic pathway. Glycosyltransferase that catalyzes the biosynthesis of ginsenoside F1 from protopanaxatriol (PPT). Triggers C20-OH glycosylation of ginsenoside Rg3 to produce ginsenoside Rd. Mediates the conversion of protopanaxadiol (PPD) to the ginsenoside compound K. catalyzes the production of 20S-O-beta-(D-glucosyl)-dammarenediol II form dammarenediol II (DM). This is UDP-glycosyltransferase 1 from Panax ginseng (Korean ginseng).